Consider the following 140-residue polypeptide: Holo-[acyl-carrier-protein] synthase (140 aa).

Mg(2+)-binding residues include Asp8 and Glu62.

It belongs to the P-Pant transferase superfamily. AcpS family. Mg(2+) is required as a cofactor.

It is found in the cytoplasm. It carries out the reaction apo-[ACP] + CoA = holo-[ACP] + adenosine 3',5'-bisphosphate + H(+). Transfers the 4'-phosphopantetheine moiety from coenzyme A to a Ser of acyl-carrier-protein. The protein is Holo-[acyl-carrier-protein] synthase of Cupriavidus taiwanensis (strain DSM 17343 / BCRC 17206 / CCUG 44338 / CIP 107171 / LMG 19424 / R1) (Ralstonia taiwanensis (strain LMG 19424)).